Reading from the N-terminus, the 181-residue chain is Peptidyl-prolyl cis-trans isomerase H (181 aa).

Residues F17 to E180 enclose the PPIase cyclophilin-type domain.

The protein belongs to the cyclophilin-type PPIase family. PPIase H subfamily.

Its subcellular location is the nucleus. It catalyses the reaction [protein]-peptidylproline (omega=180) = [protein]-peptidylproline (omega=0). PPIases accelerate the folding of proteins. It catalyzes the cis-trans isomerization of proline imidic peptide bonds in oligopeptides. This Aspergillus fumigatus (strain ATCC MYA-4609 / CBS 101355 / FGSC A1100 / Af293) (Neosartorya fumigata) protein is Peptidyl-prolyl cis-trans isomerase H (cyp3).